The following is a 207-amino-acid chain: Alpha/beta-tubulin-N-acetyltransferase 9 (207 aa).

In terms of domain architecture, N-acetyltransferase spans 35–180 (EELQRLTASE…QEVTLRLTVS (146 aa)).

It belongs to the acetyltransferase family. GNAT subfamily.

The enzyme catalyses N-terminal L-methionyl-[tubulin] + acetyl-CoA = N-terminal N(alpha)-acetyl-L-methionyl-[tubulin] + CoA + H(+). N-acetyltransferase that mediates the acetylation of the N-terminal residues of alpha- and beta-tubulin. This Homo sapiens (Human) protein is Alpha/beta-tubulin-N-acetyltransferase 9 (NAT9).